The chain runs to 736 residues: Phosphoribosylformylglycinamidine synthase subunit PurL (736 aa).

His-49 is an active-site residue. Positions 52 and 91 each coordinate ATP. Position 93 (Glu-93) interacts with Mg(2+). Substrate is bound by residues 94 to 97 and Arg-116; that span reads SHNH. His-95 acts as the Proton acceptor in catalysis. Residue Asp-117 participates in Mg(2+) binding. Gln-240 serves as a coordination point for substrate. Asp-268 is a Mg(2+) binding site. 312–314 contacts substrate; the sequence is ESQ. The ATP site is built by Asp-493 and Gly-530. Mg(2+) is bound at residue Asn-531. Ser-533 provides a ligand contact to substrate.

Belongs to the FGAMS family. As to quaternary structure, monomer. Part of the FGAM synthase complex composed of 1 PurL, 1 PurQ and 2 PurS subunits.

It localises to the cytoplasm. It catalyses the reaction N(2)-formyl-N(1)-(5-phospho-beta-D-ribosyl)glycinamide + L-glutamine + ATP + H2O = 2-formamido-N(1)-(5-O-phospho-beta-D-ribosyl)acetamidine + L-glutamate + ADP + phosphate + H(+). The protein operates within purine metabolism; IMP biosynthesis via de novo pathway; 5-amino-1-(5-phospho-D-ribosyl)imidazole from N(2)-formyl-N(1)-(5-phospho-D-ribosyl)glycinamide: step 1/2. Part of the phosphoribosylformylglycinamidine synthase complex involved in the purines biosynthetic pathway. Catalyzes the ATP-dependent conversion of formylglycinamide ribonucleotide (FGAR) and glutamine to yield formylglycinamidine ribonucleotide (FGAM) and glutamate. The FGAM synthase complex is composed of three subunits. PurQ produces an ammonia molecule by converting glutamine to glutamate. PurL transfers the ammonia molecule to FGAR to form FGAM in an ATP-dependent manner. PurS interacts with PurQ and PurL and is thought to assist in the transfer of the ammonia molecule from PurQ to PurL. The polypeptide is Phosphoribosylformylglycinamidine synthase subunit PurL (Rhodopseudomonas palustris (strain BisB5)).